We begin with the raw amino-acid sequence, 213 residues long: Dimethylamine corrinoid protein (213 aa).

Residues 1–90 (MSKEELLQEL…LMPEGASGSK (90 aa)) form the B12-binding N-terminal domain. The B12-binding domain occupies 91-213 (LGVIVNGTVE…AVAKAKELLA (123 aa)). Histidine 104 is a binding site for methylcob(III)alamin.

The protein belongs to the methylamine corrinoid protein family. In terms of assembly, copurifies with MtbA.

It participates in one-carbon metabolism; methanogenesis from dimethylamine. Its function is as follows. Acts as a methyl group carrier between MtbB1 and MtbA. Binds 1 corrinoid cofactor per protein, is subsequently demethylated by MtbA. This chain is Dimethylamine corrinoid protein, found in Methanosarcina barkeri.